A 633-amino-acid polypeptide reads, in one-letter code: Phosphomethylpyrimidine synthase (633 aa).

Substrate is bound by residues Asn245, Met274, Tyr303, His339, 359-361 (SRG), 400-403 (DGLR), and Glu439. His443 is a Zn(2+) binding site. Tyr466 is a binding site for substrate. Zn(2+) is bound at residue His507. Positions 587, 590, and 595 each coordinate [4Fe-4S] cluster.

This sequence belongs to the ThiC family. As to quaternary structure, homodimer. [4Fe-4S] cluster is required as a cofactor.

It catalyses the reaction 5-amino-1-(5-phospho-beta-D-ribosyl)imidazole + S-adenosyl-L-methionine = 4-amino-2-methyl-5-(phosphooxymethyl)pyrimidine + CO + 5'-deoxyadenosine + formate + L-methionine + 3 H(+). It participates in cofactor biosynthesis; thiamine diphosphate biosynthesis. Functionally, catalyzes the synthesis of the hydroxymethylpyrimidine phosphate (HMP-P) moiety of thiamine from aminoimidazole ribotide (AIR) in a radical S-adenosyl-L-methionine (SAM)-dependent reaction. The protein is Phosphomethylpyrimidine synthase of Neisseria meningitidis serogroup C (strain 053442).